A 228-amino-acid chain; its full sequence is Ribonuclease 3 (228 aa).

The RNase III domain occupies 5-127 (LMALQARLQH…VIGAVYLDAG (123 aa)). Residue Glu-40 participates in Mg(2+) binding. Asp-44 is an active-site residue. Mg(2+)-binding residues include Asp-113 and Glu-116. The active site involves Glu-116. Residues 154-224 (DPKTELQEWL…AAAMLQTLKA (71 aa)) form the DRBM domain.

The protein belongs to the ribonuclease III family. In terms of assembly, homodimer. The cofactor is Mg(2+).

It localises to the cytoplasm. The enzyme catalyses Endonucleolytic cleavage to 5'-phosphomonoester.. Functionally, digests double-stranded RNA. Involved in the processing of primary rRNA transcript to yield the immediate precursors to the large and small rRNAs (23S and 16S). Processes some mRNAs, and tRNAs when they are encoded in the rRNA operon. Processes pre-crRNA and tracrRNA of type II CRISPR loci if present in the organism. The chain is Ribonuclease 3 from Albidiferax ferrireducens (strain ATCC BAA-621 / DSM 15236 / T118) (Rhodoferax ferrireducens).